Consider the following 156-residue polypeptide: Small ribosomal subunit protein uS7 (156 aa).

This sequence belongs to the universal ribosomal protein uS7 family. In terms of assembly, part of the 30S ribosomal subunit. Contacts proteins S9 and S11.

Functionally, one of the primary rRNA binding proteins, it binds directly to 16S rRNA where it nucleates assembly of the head domain of the 30S subunit. Is located at the subunit interface close to the decoding center, probably blocks exit of the E-site tRNA. The chain is Small ribosomal subunit protein uS7 from Bartonella tribocorum (strain CIP 105476 / IBS 506).